The following is a 285-amino-acid chain: MPAATVDHSQRICEVWACNLDEEMKKIRQVIRKYNYVAMDTEFPGVVARPIGEFRSNADYQYQLLRCNVDLLKIIQLGLTFMNEQGEYPPGTSTWQFNFKFNLTEDMYAQDSIELLTTSGIQFKKHEEEGIETQYFAELLMTSGVVLCEGVKWLSFHSGYDFGYLIKILTNSNLPEEELDFFEILRLFFPVIYDVKYLMKSCKNLKGGLQEVAEQLELERIGPQHQAGSDSLLTGMAFFKMREMFFEDHIDDAKYCGHLYGLGSGSSYVQNGTGNAYEEEASKQS.

Residues Asp40, Glu42, Asp161, Asp230, and Glu278 each coordinate a divalent metal cation.

This sequence belongs to the CAF1 family. In terms of assembly, component of the CCR4-NOT complex; distinct complexes seem to exist that differ in the participation of probably mutually exclusive catalytic subunits; the complex contains two deadenylase subunits, CNOT6 or CNOT6L, and CNOT7 or CNOT8. In the complex, interacts directly with CNOT1. Interacts with AGO2. Interacts with TOB1; recruited by TOB1 to a ternary complex with CPEB3 which is required for mRNA deadenylation and decay. Interacts with BTG1. Interacts with BTG2. Interacts with NANOS2. Interacts with ZFP36, ZFP36L1 and ZFP36L2; these interactions are inhibited in response to phorbol 12-myristate 13-acetate (PMA) treatment in a p38 MAPK-dependent manner. Interacts with BTG4. Interacts with EIF4E; this interaction is increased by CNOT7 interaction with BTG4. Mn(2+) serves as cofactor. Requires Mg(2+) as cofactor. It depends on Co(2+) as a cofactor.

The protein localises to the nucleus. It is found in the cytoplasm. The protein resides in the P-body. Its subcellular location is the cytoplasmic ribonucleoprotein granule. It carries out the reaction Exonucleolytic cleavage of poly(A) to 5'-AMP.. Functionally, has 3'-5' poly(A) exoribonuclease activity for synthetic poly(A) RNA substrate. Its function seems to be partially redundant with that of CNOT8. Catalytic component of the CCR4-NOT complex which is one of the major cellular mRNA deadenylases and is linked to various cellular processes including bulk mRNA degradation, miRNA-mediated repression, translational repression during translational initiation and general transcription regulation. During miRNA-mediated repression the complex also seems to act as translational repressor during translational initiation. Additional complex functions may be a consequence of its influence on mRNA expression. Required for miRNA-mediated mRNA deadenylation. Associates with members of the BTG family such as TOB1 and BTG2 and is required for their anti-proliferative activity. The protein is CCR4-NOT transcription complex subunit 7 (CNOT7) of Bos taurus (Bovine).